Reading from the N-terminus, the 502-residue chain is Glycerol kinase (502 aa).

Residue threonine 14 participates in ADP binding. The ATP site is built by threonine 14, threonine 15, and serine 16. Threonine 14 is a sn-glycerol 3-phosphate binding site. Arginine 18 contacts ADP. Sn-glycerol 3-phosphate is bound by residues arginine 84, glutamate 85, tyrosine 136, and aspartate 246. Glycerol is bound by residues arginine 84, glutamate 85, tyrosine 136, aspartate 246, and glutamine 247. Threonine 268 and glycine 311 together coordinate ADP. The ATP site is built by threonine 268, glycine 311, glutamine 315, and glycine 412. ADP-binding residues include glycine 412 and asparagine 416.

The protein belongs to the FGGY kinase family. In terms of assembly, homotetramer and homodimer (in equilibrium). Heterodimer with EIIA-Glc. Binds 1 zinc ion per glycerol kinase EIIA-Glc dimer. The zinc ion is important for dimerization.

It carries out the reaction glycerol + ATP = sn-glycerol 3-phosphate + ADP + H(+). It participates in polyol metabolism; glycerol degradation via glycerol kinase pathway; sn-glycerol 3-phosphate from glycerol: step 1/1. With respect to regulation, activity of this regulatory enzyme is affected by several metabolites. Allosterically and non-competitively inhibited by fructose 1,6-bisphosphate (FBP) and unphosphorylated phosphocarrier protein EIIA-Glc (III-Glc), an integral component of the bacterial phosphotransferase (PTS) system. In terms of biological role, key enzyme in the regulation of glycerol uptake and metabolism. Catalyzes the phosphorylation of glycerol to yield sn-glycerol 3-phosphate. The sequence is that of Glycerol kinase from Shigella boydii serotype 18 (strain CDC 3083-94 / BS512).